Reading from the N-terminus, the 391-residue chain is Succinate--CoA ligase [ADP-forming] subunit beta (391 aa).

One can recognise an ATP-grasp domain in the interval 9–245; the sequence is KQIFAEYGVP…LSEEDPDEVE (237 aa). ATP-binding positions include lysine 46, 53–55, glutamate 99, alanine 102, and glutamate 107; that span reads GRG. Asparagine 200 and aspartate 214 together coordinate Mg(2+). Substrate-binding positions include asparagine 265 and 322 to 324; that span reads GIV.

This sequence belongs to the succinate/malate CoA ligase beta subunit family. Heterotetramer of two alpha and two beta subunits. The cofactor is Mg(2+).

It catalyses the reaction succinate + ATP + CoA = succinyl-CoA + ADP + phosphate. It carries out the reaction GTP + succinate + CoA = succinyl-CoA + GDP + phosphate. The protein operates within carbohydrate metabolism; tricarboxylic acid cycle; succinate from succinyl-CoA (ligase route): step 1/1. Its function is as follows. Succinyl-CoA synthetase functions in the citric acid cycle (TCA), coupling the hydrolysis of succinyl-CoA to the synthesis of either ATP or GTP and thus represents the only step of substrate-level phosphorylation in the TCA. The beta subunit provides nucleotide specificity of the enzyme and binds the substrate succinate, while the binding sites for coenzyme A and phosphate are found in the alpha subunit. In Sulfurovum sp. (strain NBC37-1), this protein is Succinate--CoA ligase [ADP-forming] subunit beta.